The chain runs to 519 residues: Asteroid homolog 1 (519 aa).

This sequence belongs to the asteroid family.

Its subcellular location is the cytoplasm. It is found in the mitochondrion. In Schizosaccharomyces pombe (strain 972 / ATCC 24843) (Fission yeast), this protein is Asteroid homolog 1 (ast1).